Here is an 82-residue protein sequence, read N- to C-terminus: NAD(P)H-quinone oxidoreductase subunit O (82 aa).

Belongs to the complex I NdhO subunit family. In terms of assembly, NDH-1 can be composed of about 15 different subunits; different subcomplexes with different compositions have been identified which probably have different functions.

The protein localises to the cellular thylakoid membrane. The catalysed reaction is a plastoquinone + NADH + (n+1) H(+)(in) = a plastoquinol + NAD(+) + n H(+)(out). It catalyses the reaction a plastoquinone + NADPH + (n+1) H(+)(in) = a plastoquinol + NADP(+) + n H(+)(out). Its function is as follows. NDH-1 shuttles electrons from an unknown electron donor, via FMN and iron-sulfur (Fe-S) centers, to quinones in the respiratory and/or the photosynthetic chain. The immediate electron acceptor for the enzyme in this species is believed to be plastoquinone. Couples the redox reaction to proton translocation, and thus conserves the redox energy in a proton gradient. Cyanobacterial NDH-1 also plays a role in inorganic carbon-concentration. The polypeptide is NAD(P)H-quinone oxidoreductase subunit O (Prochlorococcus marinus (strain MIT 9211)).